A 257-amino-acid chain; its full sequence is Large ribosomal subunit protein uL2 (257 aa).

A disordered region spans residues 207-230; it reads VEHPFGGGNHQHIGKPSTIRRDAP.

It belongs to the universal ribosomal protein uL2 family. In terms of assembly, component of the large ribosomal subunit.

Its subcellular location is the cytoplasm. In terms of biological role, component of the large ribosomal subunit. The ribosome is a large ribonucleoprotein complex responsible for the synthesis of proteins in the cell. This chain is Large ribosomal subunit protein uL2 (rpl8), found in Danio rerio (Zebrafish).